Consider the following 267-residue polypeptide: Glucosamine-6-phosphate deaminase (267 aa).

Aspartate 72 functions as the Proton acceptor; for enolization step in the catalytic mechanism. Aspartate 141 acts as the For ring-opening step in catalysis. The Proton acceptor; for ring-opening step role is filled by histidine 143. The active-site For ring-opening step is the glutamate 148.

It belongs to the glucosamine/galactosamine-6-phosphate isomerase family. NagB subfamily. In terms of assembly, homohexamer.

The catalysed reaction is alpha-D-glucosamine 6-phosphate + H2O = beta-D-fructose 6-phosphate + NH4(+). It functions in the pathway amino-sugar metabolism; N-acetylneuraminate degradation; D-fructose 6-phosphate from N-acetylneuraminate: step 5/5. With respect to regulation, allosterically activated by N-acetylglucosamine 6-phosphate (GlcNAc6P). Functionally, catalyzes the reversible isomerization-deamination of glucosamine 6-phosphate (GlcN6P) to form fructose 6-phosphate (Fru6P) and ammonium ion. The chain is Glucosamine-6-phosphate deaminase from Actinobacillus pleuropneumoniae serotype 5b (strain L20).